The primary structure comprises 197 residues: Imidazoleglycerol-phosphate dehydratase (197 aa).

This sequence belongs to the imidazoleglycerol-phosphate dehydratase family.

The protein resides in the cytoplasm. It catalyses the reaction D-erythro-1-(imidazol-4-yl)glycerol 3-phosphate = 3-(imidazol-4-yl)-2-oxopropyl phosphate + H2O. The protein operates within amino-acid biosynthesis; L-histidine biosynthesis; L-histidine from 5-phospho-alpha-D-ribose 1-diphosphate: step 6/9. This is Imidazoleglycerol-phosphate dehydratase from Stutzerimonas stutzeri (strain A1501) (Pseudomonas stutzeri).